We begin with the raw amino-acid sequence, 437 residues long: 3-deoxy-D-manno-octulosonic acid transferase (437 aa).

Residues 16 to 36 (VVLVCAFVIALPKLLYKMLVY) form a helical; Signal-anchor membrane-spanning segment. Residue Glu70 is the Proton acceptor of the active site. CMP-binding positions include 279–280 (PR), 319–321 (IGL), and 346–349 (NLLE).

This sequence belongs to the glycosyltransferase group 1 family. Glycosyltransferase 30 subfamily.

Its subcellular location is the cell inner membrane. It carries out the reaction lipid IVA (E. coli) + CMP-3-deoxy-beta-D-manno-octulosonate = alpha-Kdo-(2-&gt;6)-lipid IVA (E. coli) + CMP + H(+). The enzyme catalyses alpha-Kdo-(2-&gt;6)-lipid IVA (E. coli) + CMP-3-deoxy-beta-D-manno-octulosonate = alpha-Kdo-(2-&gt;4)-alpha-Kdo-(2-&gt;6)-lipid IVA (E. coli) + CMP + H(+). It catalyses the reaction alpha-Kdo-(2-&gt;4)-alpha-Kdo-(2-&gt;6)-lipid IVA (E. coli) + CMP-3-deoxy-beta-D-manno-octulosonate = alpha-Kdo-(2-&gt;8)-alpha-Kdo-(2-&gt;4)-alpha-Kdo-(2-&gt;6)-lipid IVA (E. coli) + CMP + H(+). The protein operates within bacterial outer membrane biogenesis; LPS core biosynthesis. In terms of biological role, involved in lipopolysaccharide (LPS) biosynthesis. Catalyzes the transfer of three 3-deoxy-D-manno-octulosonate (Kdo) residues from CMP-Kdo to lipid IV(A), the tetraacyldisaccharide-1,4'-bisphosphate precursor of lipid A. Thus generates the genus-specific LPS epitope of Chlamydia, composed of the trisaccharide alpha-Kdo-(2-&gt;8)-alpha-Kdo-(2-&gt;4)-alpha-Kdo. This chain is 3-deoxy-D-manno-octulosonic acid transferase (waaA), found in Chlamydia pneumoniae (Chlamydophila pneumoniae).